The chain runs to 643 residues: NAD-dependent malic enzyme, mitochondrial (643 aa).

Residues 1 to 38 (PRVRSFIAHQSGITSVIRRSPDIAHRMVRSLSVSSQRN) constitute a mitochondrion transit peptide. Fumarate is bound by residues Gln-116, Arg-119, and Arg-143. Tyr-164 serves as the catalytic Proton donor. Arg-219 lines the (S)-malate pocket. Residue Arg-219 participates in NAD(+) binding. Catalysis depends on Lys-237, which acts as the Proton acceptor. 2 residues coordinate a divalent metal cation: Glu-309 and Asp-310. The NAD(+) site is built by Asn-313, Asp-333, Ala-366, Ala-369, and Asn-472. Asp-333 contacts a divalent metal cation. (S)-malate is bound by residues Asn-472 and Asn-516.

It belongs to the malic enzymes family. As to quaternary structure, homotetramer. Mg(2+) is required as a cofactor. Mn(2+) serves as cofactor.

It is found in the mitochondrion matrix. The enzyme catalyses (S)-malate + NAD(+) = pyruvate + CO2 + NADH. It catalyses the reaction oxaloacetate + H(+) = pyruvate + CO2. Subject to allosteric activation by fumarate. Functionally, NAD-dependent mitochondrial malic enzyme that catalyzes the oxidative decarboxylation of malate to pyruvate. This chain is NAD-dependent malic enzyme, mitochondrial, found in Ascaris suum (Pig roundworm).